The following is a 436-amino-acid chain: MAMNFVTFNQDYSYLAVGSVSPPSATSKGFRIFTTDPFAKSYETKEGNIAIIEMLFSTSLVALILSPRRLQITNTKRQSTICELTFPTTVLAVRLNRKRLVIVLEDQIYLYDIQTMKLLYTIQTSPNPNAICALSPSSDNCYLAYPLPQKAPPSSFNPPSHTPPGTTHVSPTSGEVLIFDTLKLEAINVIEAHRSPLACITLNSDGTLLATASDKGTIIRVFSVPDGHKLYQFRRGSMPSRIFSMSFNTTSTLLCVSSSTETIHLFKLSHPTSSPDTSPSSPVGRDRSLSQSSSGYSPDRGDLTGDVGSSDFPARKHNGTLMGMIRRTSQNVGSTVAAKVGGYLPKGVSEMWEPTRDFAWFKLPKPSQTSGGSGNNGPLRSVVAMSSNTPQVMVVTSDGNFYVFSIDLSKGGEGTLTKQYSVLESNDRLGYSVTDY.

WD repeat units follow at residues 192 to 232 (AHRS…KLYQ), 237 to 276 (SMPS…SSPD), and 374 to 414 (GNNG…GGEG). Positions 233-237 (FRRGS) match the L/FRRG motif motif. The interval 268-315 (LSHPTSSPDTSPSSPVGRDRSLSQSSSGYSPDRGDLTGDVGSSDFPAR) is disordered. Residues 269 to 282 (SHPTSSPDTSPSSP) show a composition bias toward low complexity.

This sequence belongs to the WD repeat PROPPIN family. As to quaternary structure, component of the PI(3,5)P2 regulatory complex.

It localises to the preautophagosomal structure membrane. The protein localises to the vacuole membrane. Its subcellular location is the endosome membrane. In terms of biological role, the PI(3,5)P2 regulatory complex regulates both the synthesis and turnover of phosphatidylinositol 3,5-bisphosphate (PtdIns(3,5)P2). Necessary for proper vacuole morphology. Plays an important role in osmotically-induced vacuole fragmentation. Required for cytoplasm to vacuole transport (Cvt) vesicle formation, pexophagy and starvation-induced autophagy. Involved in correct atg9 trafficking to the pre-autophagosomal structure. Might also be involved in premeiotic DNA replication. The polypeptide is Autophagy-related protein 18 (atg18) (Aspergillus fumigatus (strain ATCC MYA-4609 / CBS 101355 / FGSC A1100 / Af293) (Neosartorya fumigata)).